The chain runs to 82 residues: SKKEIPGGYPVNQFKCTYECAHADTDHIRCKNLCKKLGGSWGYCYWNTCYCEYLPDSVPQKNSIEVFSCGATIVGVPDTEQQ.

An LCN-type CS-alpha/beta domain is found at 6 to 70 (PGGYPVNQFK…KNSIEVFSCG (65 aa)). Cystine bridges form between cysteine 16/cysteine 69, cysteine 20/cysteine 44, cysteine 30/cysteine 49, and cysteine 34/cysteine 51.

This sequence belongs to the long (4 C-C) scorpion toxin superfamily. Sodium channel inhibitor family. Expressed by the venom gland.

The protein localises to the secreted. Functionally, probable sodium channel inhibitor. The protein is Toxin NaTx-13 of Centruroides sculpturatus (Arizona bark scorpion).